The following is a 284-amino-acid chain: tRNA (guanine-N(7)-)-methyltransferase (284 aa).

Residues Gly102, Glu125–Ile126, Asn160–Thr161, and Cys180 each bind S-adenosyl-L-methionine. Asp183 is an active-site residue. Thr258–Glu260 lines the S-adenosyl-L-methionine pocket.

The protein belongs to the class I-like SAM-binding methyltransferase superfamily. TrmB family. In terms of assembly, forms a complex with TRM82.

The protein localises to the nucleus. The enzyme catalyses guanosine(46) in tRNA + S-adenosyl-L-methionine = N(7)-methylguanosine(46) in tRNA + S-adenosyl-L-homocysteine. It functions in the pathway tRNA modification; N(7)-methylguanine-tRNA biosynthesis. Its function is as follows. Catalyzes the formation of N(7)-methylguanine at position 46 (m7G46) in tRNA. The chain is tRNA (guanine-N(7)-)-methyltransferase from Podospora anserina (strain S / ATCC MYA-4624 / DSM 980 / FGSC 10383) (Pleurage anserina).